The sequence spans 367 residues: Uracil nucleotide/cysteinyl leukotriene receptor (367 aa).

Positions 1–28 (MSKRSWWAGSRKPPREMLKLSGSDSSQS) are disordered. The Extracellular segment spans residues 1–64 (MSKRSWWAGS…TPLENMLFAS (64 aa)). Residue Asn-42 is glycosylated (N-linked (GlcNAc...) asparagine). The chain crosses the membrane as a helical span at residues 65 to 85 (FYLLDFILALVGNTLALWLFI). Residues 86 to 92 (RDHKSGT) are Cytoplasmic-facing. Residues 93–113 (PANVFLMHLAVADLSCVLVLP) traverse the membrane as a helical segment. Residues 114–133 (TRLVYHFSGNHWPFGEIACR) lie on the Extracellular side of the membrane. Cys-132 and Cys-209 form a disulfide bridge. The chain crosses the membrane as a helical span at residues 134–154 (LTGFLFYLNMYASIYFLTCIS). The Cytoplasmic segment spans residues 155–175 (ADRFLAIVHPVKSLKLRRPLY). A helical membrane pass occupies residues 176-196 (AHLACAFLWVVVAVAMAPLLV). The Extracellular segment spans residues 197–223 (SPQTVQTNHTVVCLQLYREKASHHALV). An N-linked (GlcNAc...) asparagine glycan is attached at Asn-204. The chain crosses the membrane as a helical span at residues 224–244 (SLAVAFTFPFITTVTCYLLII). The Cytoplasmic portion of the chain corresponds to 245–260 (RSLRQGLRVEKRLKTK). Residues 261–281 (AVRMIAIVLAIFLVCFVPYHV) form a helical membrane-spanning segment. Asn-282 carries an N-linked (GlcNAc...) asparagine glycan. The Extracellular portion of the chain corresponds to 282 to 308 (NRSVYVLHYRSHGASCATQRILALANR). Residues 309 to 329 (ITSCLTSLNGALDPIMYFFVA) traverse the membrane as a helical segment. Residues 330 to 367 (EKFRHALCNLLCGKRLKGPPPSFEGKTNESSLSAKSEL) are Cytoplasmic-facing.

It belongs to the G-protein coupled receptor 1 family. As to expression, expressed in brain, kidney, heart and umbilical vein endothelial cells. Highest level in brain.

It localises to the cell membrane. Dual specificity receptor for uracil nucleotides and cysteinyl leukotrienes (CysLTs). Signals through G(i) and inhibition of adenylyl cyclase. May mediate brain damage by nucleotides and CysLTs following ischemia. The sequence is that of Uracil nucleotide/cysteinyl leukotriene receptor (GPR17) from Homo sapiens (Human).